We begin with the raw amino-acid sequence, 349 residues long: N-acetyl-gamma-glutamyl-phosphate reductase (349 aa).

Cysteine 149 is an active-site residue.

Belongs to the NAGSA dehydrogenase family. Type 1 subfamily.

It is found in the cytoplasm. It catalyses the reaction N-acetyl-L-glutamate 5-semialdehyde + phosphate + NADP(+) = N-acetyl-L-glutamyl 5-phosphate + NADPH + H(+). It functions in the pathway amino-acid biosynthesis; L-arginine biosynthesis; N(2)-acetyl-L-ornithine from L-glutamate: step 3/4. Functionally, catalyzes the NADPH-dependent reduction of N-acetyl-5-glutamyl phosphate to yield N-acetyl-L-glutamate 5-semialdehyde. The polypeptide is N-acetyl-gamma-glutamyl-phosphate reductase (Acinetobacter baumannii (strain SDF)).